We begin with the raw amino-acid sequence, 430 residues long: Glutamate-1-semialdehyde 2,1-aminomutase (430 aa).

At Lys-268 the chain carries N6-(pyridoxal phosphate)lysine.

This sequence belongs to the class-III pyridoxal-phosphate-dependent aminotransferase family. HemL subfamily. Homodimer. The cofactor is pyridoxal 5'-phosphate.

Its subcellular location is the cytoplasm. The enzyme catalyses (S)-4-amino-5-oxopentanoate = 5-aminolevulinate. The protein operates within porphyrin-containing compound metabolism; protoporphyrin-IX biosynthesis; 5-aminolevulinate from L-glutamyl-tRNA(Glu): step 2/2. This chain is Glutamate-1-semialdehyde 2,1-aminomutase (hemL), found in Bacillus subtilis (strain 168).